Reading from the N-terminus, the 417-residue chain is Serine hydroxymethyltransferase (417 aa).

K54 is modified (N6-acetyllysine). Residues L121 and G125–L127 contribute to the (6S)-5,6,7,8-tetrahydrofolate site. The residue at position 229 (K229) is an N6-(pyridoxal phosphate)lysine. Residues K250, K285, and K354 each carry the N6-acetyllysine modification. A (6S)-5,6,7,8-tetrahydrofolate-binding site is contributed by S355 to F357. Position 375 is an N6-acetyllysine (K375).

This sequence belongs to the SHMT family. As to quaternary structure, homodimer. The cofactor is pyridoxal 5'-phosphate.

It localises to the cytoplasm. It carries out the reaction (6R)-5,10-methylene-5,6,7,8-tetrahydrofolate + glycine + H2O = (6S)-5,6,7,8-tetrahydrofolate + L-serine. It functions in the pathway one-carbon metabolism; tetrahydrofolate interconversion. Its pathway is amino-acid biosynthesis; glycine biosynthesis; glycine from L-serine: step 1/1. In terms of biological role, catalyzes the reversible interconversion of serine and glycine with tetrahydrofolate (THF) serving as the one-carbon carrier. This reaction serves as the major source of one-carbon groups required for the biosynthesis of purines, thymidylate, methionine, and other important biomolecules. Also exhibits THF-independent aldolase activity toward beta-hydroxyamino acids, producing glycine and aldehydes, via a retro-aldol mechanism. The sequence is that of Serine hydroxymethyltransferase from Escherichia coli O1:K1 / APEC.